A 398-amino-acid polypeptide reads, in one-letter code: Probable L-tyrosine/L-aspartate decarboxylase (398 aa).

Lys-242 carries the N6-(pyridoxal phosphate)lysine modification.

This sequence belongs to the group II decarboxylase family. MfnA subfamily. The cofactor is pyridoxal 5'-phosphate.

The catalysed reaction is L-tyrosine + H(+) = tyramine + CO2. It catalyses the reaction L-aspartate + H(+) = beta-alanine + CO2. The protein operates within cofactor biosynthesis; methanofuran biosynthesis. Its pathway is cofactor biosynthesis; coenzyme A biosynthesis. In terms of biological role, catalyzes the decarboxylation of L-tyrosine to produce tyramine for methanofuran biosynthesis. Can also catalyze the decarboxylation of L-aspartate to produce beta-alanine for coenzyme A (CoA) biosynthesis. This Methanosarcina mazei (strain ATCC BAA-159 / DSM 3647 / Goe1 / Go1 / JCM 11833 / OCM 88) (Methanosarcina frisia) protein is Probable L-tyrosine/L-aspartate decarboxylase.